The primary structure comprises 87 residues: HssA/B-like protein 56 (87 aa).

Belongs to the hssA/B family.

The sequence is that of HssA/B-like protein 56 (hssl56) from Dictyostelium discoideum (Social amoeba).